The following is a 454-amino-acid chain: Dihydrolipoyllysine-residue succinyltransferase component of 2-oxoglutarate dehydrogenase complex, mitochondrial (454 aa).

Residues 1–68 (MLSRSRCVSR…RFFQTTAVCK (68 aa)) constitute a mitochondrion transit peptide. A Lipoyl-binding domain is found at 71–145 (VITVQTPAFA…EGGTPLFTLR (75 aa)). Serine 82 carries the post-translational modification Phosphoserine. Residue lysine 111 is modified to N6-lipoyllysine. The interval 147 to 227 (TGAAPAKAKP…KGLRSEHREK (81 aa)) is disordered. Residues 149–163 (AAPAKAKPAETPAPA) show a composition bias toward low complexity. The residue at position 155 (lysine 155) is an N6-acetyllysine. Residues 186–197 (PPVPSPSQPPSS) show a composition bias toward pro residues. A compositionally biased stretch (low complexity) spans 198 to 217 (KPVSAIKPTAAPPLAEAGAA). Residues lysine 268, lysine 273, lysine 274, lysine 278, and lysine 308 each carry the N6-acetyllysine modification. Residues histidine 425 and aspartate 429 contribute to the active site.

Belongs to the 2-oxoacid dehydrogenase family. As to quaternary structure, the 2-oxoglutarate dehydrogenase complex is composed of OGDH (2-oxoglutarate dehydrogenase; E1), DLST (dihydrolipoamide succinyltransferase; E2), DLD (dihydrolipoamide dehydrogenase; E3) and the assembly factor KGD4. It contains multiple copies of the three enzymatic components (E1, E2 and E3). In the nucleus, the 2-oxoglutarate dehydrogenase complex associates with KAT2A. Interacts with ABHD11; this interaction maintains the functional lipoylation of the 2-oxoglutarate dehydrogenase complex. (R)-lipoate is required as a cofactor.

It is found in the mitochondrion matrix. It localises to the nucleus. It catalyses the reaction N(6)-[(R)-dihydrolipoyl]-L-lysyl-[protein] + succinyl-CoA = N(6)-[(R)-S(8)-succinyldihydrolipoyl]-L-lysyl-[protein] + CoA. It functions in the pathway amino-acid degradation; L-lysine degradation via saccharopine pathway; glutaryl-CoA from L-lysine: step 6/6. The protein operates within carbohydrate metabolism; tricarboxylic acid cycle. Dihydrolipoamide succinyltransferase (E2) component of the 2-oxoglutarate dehydrogenase complex. The 2-oxoglutarate dehydrogenase complex catalyzes the overall conversion of 2-oxoglutarate to succinyl-CoA and CO(2). The 2-oxoglutarate dehydrogenase complex is mainly active in the mitochondrion. A fraction of the 2-oxoglutarate dehydrogenase complex also localizes in the nucleus and is required for lysine succinylation of histones: associates with KAT2A on chromatin and provides succinyl-CoA to histone succinyltransferase KAT2A. The polypeptide is Dihydrolipoyllysine-residue succinyltransferase component of 2-oxoglutarate dehydrogenase complex, mitochondrial (Mus musculus (Mouse)).